Reading from the N-terminus, the 563-residue chain is Phosphomethylpyrimidine synthase (563 aa).

Substrate-binding positions include asparagine 180, methionine 209, tyrosine 238, histidine 274, serine 294–glycine 296, aspartate 335–arginine 338, and glutamate 374. Residue histidine 378 coordinates Zn(2+). Substrate is bound at residue tyrosine 401. Residue histidine 442 coordinates Zn(2+). Residues cysteine 522, cysteine 525, and cysteine 530 each coordinate [4Fe-4S] cluster.

The protein belongs to the ThiC family. [4Fe-4S] cluster serves as cofactor.

The enzyme catalyses 5-amino-1-(5-phospho-beta-D-ribosyl)imidazole + S-adenosyl-L-methionine = 4-amino-2-methyl-5-(phosphooxymethyl)pyrimidine + CO + 5'-deoxyadenosine + formate + L-methionine + 3 H(+). It functions in the pathway cofactor biosynthesis; thiamine diphosphate biosynthesis. Catalyzes the synthesis of the hydroxymethylpyrimidine phosphate (HMP-P) moiety of thiamine from aminoimidazole ribotide (AIR) in a radical S-adenosyl-L-methionine (SAM)-dependent reaction. The polypeptide is Phosphomethylpyrimidine synthase (Geobacillus thermodenitrificans (strain NG80-2)).